Reading from the N-terminus, the 230-residue chain is Large ribosomal subunit protein uL1 (230 aa).

It belongs to the universal ribosomal protein uL1 family. As to quaternary structure, part of the 50S ribosomal subunit.

Its function is as follows. Binds directly to 23S rRNA. The L1 stalk is quite mobile in the ribosome, and is involved in E site tRNA release. Functionally, protein L1 is also a translational repressor protein, it controls the translation of the L11 operon by binding to its mRNA. This is Large ribosomal subunit protein uL1 from Bradyrhizobium sp. (strain BTAi1 / ATCC BAA-1182).